Here is a 153-residue protein sequence, read N- to C-terminus: Large ribosomal subunit protein uL15 (153 aa).

Residues 1–47 (MRLHELSPAPGSRKDRKRVGRGDAGRGNYSGRGMKGQKARSGGATRP) form a disordered region.

The protein belongs to the universal ribosomal protein uL15 family. As to quaternary structure, part of the 50S ribosomal subunit.

In terms of biological role, binds to the 23S rRNA. The sequence is that of Large ribosomal subunit protein uL15 from Dehalococcoides mccartyi (strain ATCC BAA-2100 / JCM 16839 / KCTC 5957 / BAV1).